A 95-amino-acid chain; its full sequence is Large ribosomal subunit protein bL28 (95 aa).

Positions Met-1–Asn-22 are disordered.

Belongs to the bacterial ribosomal protein bL28 family.

The sequence is that of Large ribosomal subunit protein bL28 from Ruegeria pomeroyi (strain ATCC 700808 / DSM 15171 / DSS-3) (Silicibacter pomeroyi).